The primary structure comprises 261 residues: Proteasome subunit alpha type-4 (261 aa).

Residues S13 and S75 each carry the phosphoserine modification. K127 is subject to N6-acetyllysine. Phosphoserine is present on S173. The residue at position 176 (K176) is an N6-acetyllysine. Positions 240–261 are disordered; that stretch reads HEEEEAKAEREKKEKEQREKDK.

This sequence belongs to the peptidase T1A family. The 26S proteasome consists of a 20S proteasome core and two 19S regulatory subunits. The 20S proteasome core is a barrel-shaped complex made of 28 subunits that are arranged in four stacked rings. The two outer rings are each formed by seven alpha subunits, and the two inner rings are formed by seven beta subunits. The proteolytic activity is exerted by three beta-subunits PSMB5, PSMB6 and PSMB7. In terms of tissue distribution, ubiquitous.

Its subcellular location is the cytoplasm. It is found in the nucleus. In terms of biological role, component of the 20S core proteasome complex involved in the proteolytic degradation of most intracellular proteins. This complex plays numerous essential roles within the cell by associating with different regulatory particles. Associated with two 19S regulatory particles, forms the 26S proteasome and thus participates in the ATP-dependent degradation of ubiquitinated proteins. The 26S proteasome plays a key role in the maintenance of protein homeostasis by removing misfolded or damaged proteins that could impair cellular functions, and by removing proteins whose functions are no longer required. Associated with the PA200 or PA28, the 20S proteasome mediates ubiquitin-independent protein degradation. This type of proteolysis is required in several pathways including spermatogenesis (20S-PA200 complex) or generation of a subset of MHC class I-presented antigenic peptides (20S-PA28 complex). This is Proteasome subunit alpha type-4 (Psma4) from Rattus norvegicus (Rat).